The primary structure comprises 289 residues: DegV domain-containing protein YteA (289 aa).

The region spanning 3–284 is the DegV domain; it reads FQIMTDSTAD…DGTIAIFSIS (282 aa). Residues threonine 62 and serine 94 each contribute to the hexadecanoate site.

May bind long-chain fatty acids, such as palmitate, and may play a role in lipid transport or fatty acid metabolism. The protein is DegV domain-containing protein YteA (yteA) of Lactococcus lactis subsp. lactis (strain IL1403) (Streptococcus lactis).